The primary structure comprises 804 residues: Leucine--tRNA ligase (804 aa).

Residues 40 to 51 (PYPSGAGLHVGH) carry the 'HIGH' region motif. The short motif at 576-580 (KMSKS) is the 'KMSKS' region element. Lys579 contacts ATP.

This sequence belongs to the class-I aminoacyl-tRNA synthetase family.

The protein resides in the cytoplasm. The catalysed reaction is tRNA(Leu) + L-leucine + ATP = L-leucyl-tRNA(Leu) + AMP + diphosphate. The protein is Leucine--tRNA ligase of Staphylococcus haemolyticus (strain JCSC1435).